The sequence spans 476 residues: Protein EARLY HEADING DATE 2 (476 aa).

Polar residues predominate over residues 1–13 (MLLSDLSSDQEAT). The tract at residues 1-27 (MLLSDLSSDQEATGSNSHGGGGGGDRM) is disordered. C2H2-type zinc fingers lie at residues 106–128 (FVCE…RRGH) and 156–186 (YVCP…SRKH). Short sequence motifs (nuclear localization signal) lie at residues 124–131 (HRRGHNLP) and 178–185 (IKKHFSRK). Residues 191 to 214 (WRCERCGKRYAVHSDWKAHVKNCG) form a C2H2-type 2; degenerate zinc finger. Residues C193, C196, H209, C213, C220, C222, H235, and C239 each coordinate Zn(2+). The CCHC-type 2; atypical zinc-finger motif lies at 218–241 (YRCDCGILFSRKDSLLTHRAFCDA). An SHR-binding region spans residues 228-240 (RKDSLLTHRAFCD).

The protein resides in the nucleus. In terms of biological role, transcription activator that acts as a flowering master switch in both long and short days, independently of the circadian clock. Promotes flowering upstream of HD1 by up-regulating FTL1, FTL4, FTL5, FTL6, EHD1, HD3A and RFT1. Seems to repress FTL11 expression. May recognize the consensus motif 5'-TTTGTCGTAAT-3' in target gene promoters. The protein is Protein EARLY HEADING DATE 2 of Oryza sativa subsp. indica (Rice).